The chain runs to 224 residues: Uracil-DNA glycosylase (224 aa).

Aspartate 65 (proton acceptor) is an active-site residue.

The protein belongs to the uracil-DNA glycosylase (UDG) superfamily. UNG family.

Its subcellular location is the cytoplasm. The catalysed reaction is Hydrolyzes single-stranded DNA or mismatched double-stranded DNA and polynucleotides, releasing free uracil.. Its function is as follows. Excises uracil residues from the DNA which can arise as a result of misincorporation of dUMP residues by DNA polymerase or due to deamination of cytosine. The protein is Uracil-DNA glycosylase of Buchnera aphidicola subsp. Baizongia pistaciae (strain Bp).